We begin with the raw amino-acid sequence, 481 residues long: Exodeoxyribonuclease I (481 aa).

The region spanning 12-193 is the Exonuclease domain; that stretch reads LFYDYETFGK…SSDVYATMNI (182 aa). Mg(2+) is bound by residues Asp-15, Glu-17, and Asp-186. Glu-17 contacts substrate. Residues 202 to 350 enclose the ExoI SH3-like domain; that stretch reads PKLFNFFFKY…KLKKFLCSIA (149 aa). The ExoI C-terminal domain maps to 356–471; sequence NGSNVDLKMY…ELFEYVKYTR (116 aa).

In terms of assembly, monomer. Interacts with ssb (via C-terminus); this interaction stimulates the exonuclease activity by recruiting the enzyme to its substrate. Requires Mg(2+) as cofactor.

It carries out the reaction Exonucleolytic cleavage in the 3'- to 5'-direction to yield nucleoside 5'-phosphates.. Functionally, degrades single-stranded DNA (ssDNA) in a highly processive manner. Also functions as a DNA deoxyribophosphodiesterase that releases deoxyribose-phosphate moieties following the cleavage of DNA at an apurinic/apyrimidinic (AP) site by either an AP endonuclease or AP lyase. The protein is Exodeoxyribonuclease I (sbcB) of Buchnera aphidicola subsp. Baizongia pistaciae (strain Bp).